A 76-amino-acid chain; its full sequence is Exodeoxyribonuclease 7 small subunit (76 aa).

Belongs to the XseB family. Heterooligomer composed of large and small subunits.

It localises to the cytoplasm. The catalysed reaction is Exonucleolytic cleavage in either 5'- to 3'- or 3'- to 5'-direction to yield nucleoside 5'-phosphates.. Functionally, bidirectionally degrades single-stranded DNA into large acid-insoluble oligonucleotides, which are then degraded further into small acid-soluble oligonucleotides. The protein is Exodeoxyribonuclease 7 small subunit of Legionella pneumophila (strain Paris).